We begin with the raw amino-acid sequence, 819 residues long: Endonuclease MutS2 (819 aa).

339 to 346 contributes to the ATP binding site; sequence GPNTGGKT. Residues 744–819 enclose the Smr domain; it reads VDVRGLRVDE…GAGVTVAELA (76 aa).

It belongs to the DNA mismatch repair MutS family. MutS2 subfamily. Homodimer. Binds to stalled ribosomes, contacting rRNA.

In terms of biological role, endonuclease that is involved in the suppression of homologous recombination and thus may have a key role in the control of bacterial genetic diversity. Its function is as follows. Acts as a ribosome collision sensor, splitting the ribosome into its 2 subunits. Detects stalled/collided 70S ribosomes which it binds and splits by an ATP-hydrolysis driven conformational change. Acts upstream of the ribosome quality control system (RQC), a ribosome-associated complex that mediates the extraction of incompletely synthesized nascent chains from stalled ribosomes and their subsequent degradation. Probably generates substrates for RQC. This chain is Endonuclease MutS2, found in Gemmatimonas aurantiaca (strain DSM 14586 / JCM 11422 / NBRC 100505 / T-27).